Here is a 435-residue protein sequence, read N- to C-terminus: Elongation factor 1-alpha (435 aa).

The tr-type G domain occupies 4–229; that stretch reads KPHLNLIVIG…DQLEIPPKPV (226 aa). The tract at residues 13–20 is G1; the sequence is GHVDHGKS. Residue 13–20 coordinates GTP; the sequence is GHVDHGKS. Residue serine 20 coordinates Mg(2+). A G2 region spans residues 69 to 73; sequence GVTIN. The G3 stretch occupies residues 90–93; it reads DAPG. GTP contacts are provided by residues 90 to 94 and 152 to 155; these read DAPGH and NKMD. The segment at 152–155 is G4; that stretch reads NKMD. The G5 stretch occupies residues 193–195; it reads VAP.

It belongs to the TRAFAC class translation factor GTPase superfamily. Classic translation factor GTPase family. EF-Tu/EF-1A subfamily.

It is found in the cytoplasm. The enzyme catalyses GTP + H2O = GDP + phosphate + H(+). Its function is as follows. GTP hydrolase that promotes the GTP-dependent binding of aminoacyl-tRNA to the A-site of ribosomes during protein biosynthesis. The polypeptide is Elongation factor 1-alpha (Sulfurisphaera tokodaii (strain DSM 16993 / JCM 10545 / NBRC 100140 / 7) (Sulfolobus tokodaii)).